Reading from the N-terminus, the 419-residue chain is Probable pectate lyase C (419 aa).

A signal peptide spans 1-19 (MRLGIALFSLIGLCHSVSA). N-linked (GlcNAc...) asparagine glycans are attached at residues asparagine 48, asparagine 164, and asparagine 201. The active site involves arginine 204. The 36-residue stretch at 261-296 (NEYFHGYVETNYYDPDRDGTLNGNELGVSASNYGGM) folds into the EF-hand domain. Residues aspartate 274, aspartate 276, aspartate 278, threonine 280, and glutamate 285 each contribute to the Ca(2+) site. A disordered region spans residues 350 to 395 (ELISDEASMGGPGDLDGGSPPTDSDGDGIPDDAETEIGSDPNTADS). A compositionally biased stretch (acidic residues) spans 373-386 (SDGDGIPDDAETEI).

Belongs to the polysaccharide lyase 1 family. Ca(2+) is required as a cofactor.

It localises to the secreted. The catalysed reaction is Eliminative cleavage of (1-&gt;4)-alpha-D-galacturonan to give oligosaccharides with 4-deoxy-alpha-D-galact-4-enuronosyl groups at their non-reducing ends.. Functionally, pectinolytic enzyme consist of four classes of enzymes: pectin lyase, polygalacturonase, pectin methylesterase and rhamnogalacturonase. Among pectinolytic enzymes, pectin lyase is the most important in depolymerization of pectin, since it cleaves internal glycosidic bonds of highly methylated pectins. Favors pectate, the anion, over pectin, the methyl ester. This is Probable pectate lyase C (plyC) from Aspergillus terreus (strain NIH 2624 / FGSC A1156).